The sequence spans 83 residues: Bublin coiled-coil protein (83 aa).

The disordered stretch occupies residues 1–25 (MSGPNGDLGMPVDAGTEGENDSFGE). Residues 25–74 (EAEYAAINSMLDQINSCLDHLEEKNDHLHARLQELLESNRQTRLEFQQQL) adopt a coiled-coil conformation. A Phosphoserine modification is found at serine 82.

It belongs to the UPF0184 (EST00098) family.

The protein localises to the cell junction. It localises to the cytoplasm. Its subcellular location is the cytoskeleton. Functionally, essential for intermediate filament organization in intestinal cells, interacts with intermediate filament and regulates intestinal lumen morphology. In Mus musculus (Mouse), this protein is Bublin coiled-coil protein.